Here is a 227-residue protein sequence, read N- to C-terminus: Small ribosomal subunit protein uS3 (227 aa).

The KH type-2 domain occupies 38–106; sequence LRKYLREKLA…EVHLNIVEIR (69 aa).

This sequence belongs to the universal ribosomal protein uS3 family. Part of the 30S ribosomal subunit. Forms a tight complex with proteins S10 and S14.

Its function is as follows. Binds the lower part of the 30S subunit head. Binds mRNA in the 70S ribosome, positioning it for translation. The protein is Small ribosomal subunit protein uS3 of Paramagnetospirillum magneticum (strain ATCC 700264 / AMB-1) (Magnetospirillum magneticum).